Consider the following 298-residue polypeptide: Aspartate carbamoyltransferase catalytic subunit (298 aa).

Residues Arg50 and Thr51 each contribute to the carbamoyl phosphate site. Position 79 (Lys79) interacts with L-aspartate. Carbamoyl phosphate contacts are provided by Arg100, His128, and Gln131. Positions 161 and 220 each coordinate L-aspartate. The carbamoyl phosphate site is built by Leu259 and Pro260.

It belongs to the aspartate/ornithine carbamoyltransferase superfamily. ATCase family. As to quaternary structure, heterooligomer of catalytic and regulatory chains.

It carries out the reaction carbamoyl phosphate + L-aspartate = N-carbamoyl-L-aspartate + phosphate + H(+). Its pathway is pyrimidine metabolism; UMP biosynthesis via de novo pathway; (S)-dihydroorotate from bicarbonate: step 2/3. In terms of biological role, catalyzes the condensation of carbamoyl phosphate and aspartate to form carbamoyl aspartate and inorganic phosphate, the committed step in the de novo pyrimidine nucleotide biosynthesis pathway. This chain is Aspartate carbamoyltransferase catalytic subunit, found in Sulfurisphaera tokodaii (strain DSM 16993 / JCM 10545 / NBRC 100140 / 7) (Sulfolobus tokodaii).